The primary structure comprises 58 residues: Small ribosomal subunit protein bS21 (58 aa).

The segment covering 32–42 (IRKREHYEKPS) has biased composition (basic and acidic residues). The tract at residues 32–58 (IRKREHYEKPSVKRKKKSEAARKRKFK) is disordered. The span at 43–58 (VKRKKKSEAARKRKFK) shows a compositional bias: basic residues.

Belongs to the bacterial ribosomal protein bS21 family.

The polypeptide is Small ribosomal subunit protein bS21 (Lachnoclostridium phytofermentans (strain ATCC 700394 / DSM 18823 / ISDg) (Clostridium phytofermentans)).